The sequence spans 240 residues: Intestine-specific homeobox (240 aa).

The segment at 36-82 is disordered; sequence PTERRSLPRPQSICKEDSRQTTIPGSKLERPPQDQPQEEKKNKRRVR. Residues 62 to 76 are compositionally biased toward basic and acidic residues; the sequence is KLERPPQDQPQEEKK. The segment at residues 78–137 is a DNA-binding region (homeobox); it reads KRRVRTTFTTEQLQELEKLFHFTHYPDIHVRSQLASRINLPEARVQIWFQNQRAKWRKQE.

As to expression, expressed in intestinal epithelial cells from the duodenum to the proximal colon.

The protein resides in the nucleus. Transcription factor that regulates gene expression in intestine. May participate in vitamin A metabolism most likely by regulating BCO1 expression in the intestine. This is Intestine-specific homeobox (Isx) from Mus musculus (Mouse).